We begin with the raw amino-acid sequence, 253 residues long: Imidazole glycerol phosphate synthase subunit HisF (253 aa).

Active-site residues include Asp11 and Asp130.

It belongs to the HisA/HisF family. Heterodimer of HisH and HisF.

It is found in the cytoplasm. The catalysed reaction is 5-[(5-phospho-1-deoxy-D-ribulos-1-ylimino)methylamino]-1-(5-phospho-beta-D-ribosyl)imidazole-4-carboxamide + L-glutamine = D-erythro-1-(imidazol-4-yl)glycerol 3-phosphate + 5-amino-1-(5-phospho-beta-D-ribosyl)imidazole-4-carboxamide + L-glutamate + H(+). Its pathway is amino-acid biosynthesis; L-histidine biosynthesis; L-histidine from 5-phospho-alpha-D-ribose 1-diphosphate: step 5/9. IGPS catalyzes the conversion of PRFAR and glutamine to IGP, AICAR and glutamate. The HisF subunit catalyzes the cyclization activity that produces IGP and AICAR from PRFAR using the ammonia provided by the HisH subunit. The protein is Imidazole glycerol phosphate synthase subunit HisF of Cereibacter sphaeroides (strain KD131 / KCTC 12085) (Rhodobacter sphaeroides).